The chain runs to 276 residues: Probable endonuclease 4 (276 aa).

The Zn(2+) site is built by His-70, His-108, Glu-144, Asp-177, His-180, His-211, Asp-224, His-226, and Glu-256.

The protein belongs to the AP endonuclease 2 family. It depends on Zn(2+) as a cofactor.

The enzyme catalyses Endonucleolytic cleavage to 5'-phosphooligonucleotide end-products.. In terms of biological role, endonuclease IV plays a role in DNA repair. It cleaves phosphodiester bonds at apurinic or apyrimidinic (AP) sites, generating a 3'-hydroxyl group and a 5'-terminal sugar phosphate. The protein is Probable endonuclease 4 of Metamycoplasma arthritidis (strain 158L3-1) (Mycoplasma arthritidis).